We begin with the raw amino-acid sequence, 789 residues long: Probable phosphoketolase (789 aa).

It belongs to the XFP family. Thiamine diphosphate is required as a cofactor.

In Brucella abortus (strain 2308), this protein is Probable phosphoketolase.